Here is a 388-residue protein sequence, read N- to C-terminus: Chorismate synthase (388 aa).

Arg39 and Arg45 together coordinate NADP(+). FMN is bound by residues 130–132 (RSS), 251–252 (NA), Gly296, 311–315 (KPIPT), and Arg337.

The protein belongs to the chorismate synthase family. In terms of assembly, homotetramer. FMNH2 serves as cofactor.

It carries out the reaction 5-O-(1-carboxyvinyl)-3-phosphoshikimate = chorismate + phosphate. It functions in the pathway metabolic intermediate biosynthesis; chorismate biosynthesis; chorismate from D-erythrose 4-phosphate and phosphoenolpyruvate: step 7/7. Its function is as follows. Catalyzes the anti-1,4-elimination of the C-3 phosphate and the C-6 proR hydrogen from 5-enolpyruvylshikimate-3-phosphate (EPSP) to yield chorismate, which is the branch point compound that serves as the starting substrate for the three terminal pathways of aromatic amino acid biosynthesis. This reaction introduces a second double bond into the aromatic ring system. This is Chorismate synthase from Streptococcus mutans serotype c (strain ATCC 700610 / UA159).